Reading from the N-terminus, the 168-residue chain is Cell division inhibitor SulA (168 aa).

Residues 106-112 (ALLTGNY) form a ftsZ binding region. Residues 161-168 (KIHSSLYH) are lon protease binding.

It belongs to the SulA family. As to quaternary structure, interacts with FtsZ. Is rapidly cleaved and degraded by the Lon protease once DNA damage is repaired.

In terms of biological role, component of the SOS system and an inhibitor of cell division. Accumulation of SulA causes rapid cessation of cell division and the appearance of long, non-septate filaments. In the presence of GTP, binds a polymerization-competent form of FtsZ in a 1:1 ratio, thus inhibiting FtsZ polymerization and therefore preventing it from participating in the assembly of the Z ring. This mechanism prevents the premature segregation of damaged DNA to daughter cells during cell division. The polypeptide is Cell division inhibitor SulA (Yersinia enterocolitica serotype O:8 / biotype 1B (strain NCTC 13174 / 8081)).